The sequence spans 156 residues: Transcription antitermination protein NusB (156 aa).

Belongs to the NusB family.

Functionally, involved in transcription antitermination. Required for transcription of ribosomal RNA (rRNA) genes. Binds specifically to the boxA antiterminator sequence of the ribosomal RNA (rrn) operons. The sequence is that of Transcription antitermination protein NusB from Mycobacterium tuberculosis (strain CDC 1551 / Oshkosh).